Reading from the N-terminus, the 314-residue chain is MVPRVPQPGIWCPAVTFFDSKTDTLDLASQERYYAYLARSGLTGLVILGTNAEAFLLTREERAQLIATARKAVGPDFPIMAGVGAHSTRQVLEHINDASVAGANYVLVLPPAYFGKATTPPVIKSFFDDVSCQSPLPVVIYNFPGVCNGIDLDSDMITTIARKNPNVVGVKLTCASVGKITRLAATLPPAAFSVFGGQSDFLIGGLSVGSAGCIAAFANVFPKTVSKIYELYKAGKVDQAMELHRKAALAESPCKSGIATTKYAAAIFSAKAAGIEDAEEKLRPRKPYDPPSEAAKQEVRKVMAEVAAIEAGLS.

50-51 (TN) contributes to the substrate binding site. The active-site Schiff-base intermediate with substrate is the K171.

Belongs to the DapA family.

The enzyme catalyses (4S)-4-hydroxy-2-oxoglutarate = glyoxylate + pyruvate. It carries out the reaction (4R)-4-hydroxy-2-oxoglutarate = glyoxylate + pyruvate. In terms of biological role, may catalyze the final step in the metabolic pathway of hydroxyproline. This is Putative 4-hydroxy-2-oxoglutarate aldolase, mitochondrial from Coccidioides immitis (strain RS) (Valley fever fungus).